Reading from the N-terminus, the 78-residue chain is Chassatide C4 (78 aa).

An N-terminal signal peptide occupies residues 1–23; that stretch reads MAKFATQLFLLTASVVMLEVQSS. The propeptide at 24 to 42 is removed in mature form; that stretch reads IVIMQDPDLGRKLIMNPAN. Positions 43-71 form a cross-link, cyclopeptide (Gly-Asn); sequence GASCGETCFTGICFTAGCSCNPWPTCTRN. Cystine bridges form between Cys-46-Cys-60, Cys-50-Cys-62, and Cys-55-Cys-68. A propeptide spans 72–78 (removed in mature form); sequence GLNPESI.

This is a cyclic peptide.

Its function is as follows. Probably participates in a plant defense mechanism. The sequence is that of Chassatide C4 from Chassalia chartacea (Chassalia curviflora).